The following is a 35-amino-acid chain: Thionin NsW1 (35 aa).

3 cysteine pairs are disulfide-bonded: Cys4/Cys32, Cys12/Cys30, and Cys16/Cys26.

Contains 4 disulfide bonds.

It is found in the secreted. Its function is as follows. Antimicrobial peptide disrupting membranes. Has antibacterial against Gram-positive bacteria S.aureus (MIC=6.5 uM) and B.subtilis (MIC=3.25 uM) but not against Gram-negative bacterium E.coli. Has antifungal activity against C.albicans (MIC=1.63 uM). The polypeptide is Thionin NsW1 (Nigella sativa (Black cumin)).